The chain runs to 297 residues: MIIHPNFDPVAIHLGPLAVRWYGLMYLVGFIAAIVVGRIRLKLPHVAAQGWTAKDIDDMLFYGVLGTVLGGRLGYVLFYKAGFYLSHPLDVFKVWEGGMSFHGGFLGVTLAMVLFAWQRKRHWLQVTDFVAPMVPTGLAAGRLGNFINGELWGRVTDPGAPWAMLFPGAMRDDAAWLPKHPELVEKWHLADVFMQYQMLPRHPSQLYEIALEGVALFFVLFFFARKPRPMGAVSALFLIGYGLARFTVEFAREPDDFLGLLALGLSMGQWLSLPMIVAGIALMVWAYRRRRTAAAAA.

Helical transmembrane passes span leucine 17–glycine 37, methionine 59–tyrosine 79, and glycine 97–tryptophan 117. Arginine 142 serves as a coordination point for a 1,2-diacyl-sn-glycero-3-phospho-(1'-sn-glycerol). Helical transmembrane passes span methionine 230–phenylalanine 250 and phenylalanine 257–valine 277.

Belongs to the Lgt family.

It is found in the cell inner membrane. It catalyses the reaction L-cysteinyl-[prolipoprotein] + a 1,2-diacyl-sn-glycero-3-phospho-(1'-sn-glycerol) = an S-1,2-diacyl-sn-glyceryl-L-cysteinyl-[prolipoprotein] + sn-glycerol 1-phosphate + H(+). Its pathway is protein modification; lipoprotein biosynthesis (diacylglyceryl transfer). Its function is as follows. Catalyzes the transfer of the diacylglyceryl group from phosphatidylglycerol to the sulfhydryl group of the N-terminal cysteine of a prolipoprotein, the first step in the formation of mature lipoproteins. The sequence is that of Phosphatidylglycerol--prolipoprotein diacylglyceryl transferase from Burkholderia multivorans (strain ATCC 17616 / 249).